The following is a 155-amino-acid chain: Regulatory protein RecX (155 aa).

It belongs to the RecX family.

It is found in the cytoplasm. Modulates RecA activity. This is Regulatory protein RecX from Pseudomonas fluorescens (strain SBW25).